The following is a 346-amino-acid chain: MFGFDNLILGVYLFNFLLILTATYTDIKERIIPHFVIILMLIVNLPIGYYFFGFDAITSFFATLILCLILGVGMGGGDVKMFTALSPLFAAETIYFVPKDISILIGLSALFAAIFPMTKILKNYWKDIIPSSAYLAMLIGIIVSITEIYSIGNTKTILWSYIILSIFISRKIPKYRIISNKLGYITPIYLIGFYLLNPAYFVSENVLISFFVYIGQLSLISLVIYALTGAEISSKKQISDLKEGDIIRDIVTIKENGEVTVENANILKRFKHMIYGEMGKLEGKSLMTDGEGLSDENLELLNKLQNEGKIGGELNVLTTYPFVPFVLVAYCVITLLNMGVINYLVG.

The next 10 helical transmembrane spans lie at 1 to 21 (MFGF…LILT), 31 to 51 (IIPH…GYYF), 56 to 76 (AITS…GMGG), 77 to 97 (GDVK…IYFV), 101 to 121 (ISIL…TKIL), 128 to 148 (IIPS…ITEI), 149 to 169 (YSIG…IFIS), 182 to 202 (LGYI…AYFV), 206 to 226 (VLIS…VIYA), and 321 to 341 (PFVP…MGVI).

Belongs to the peptidase A24 family.

The protein resides in the cell membrane. In terms of biological role, peptidase that processes the N-terminus of prepilins. Specifically cleaves proteins with a class III (type IV pilin-like) signal sequence, such as the major structural pilin EpdE and the minor pilins EpdA, EpdC and EpdD. Is not able to cleave the preflagellin subunit FlaB2. In Methanococcus maripaludis (strain DSM 14266 / JCM 13030 / NBRC 101832 / S2 / LL), this protein is Prepilin peptidase EppA.